An 80-amino-acid polypeptide reads, in one-letter code: Large ribosomal subunit protein uL24 (80 aa).

It belongs to the universal ribosomal protein uL24 family. As to quaternary structure, part of the 50S ribosomal subunit.

Its function is as follows. One of two assembly initiator proteins, it binds directly to the 5'-end of the 23S rRNA, where it nucleates assembly of the 50S subunit. In terms of biological role, one of the proteins that surrounds the polypeptide exit tunnel on the outside of the subunit. This chain is Large ribosomal subunit protein uL24, found in Chlorobium phaeobacteroides (strain BS1).